Consider the following 123-residue polypeptide: Large ribosomal subunit protein bL12 (123 aa).

This sequence belongs to the bacterial ribosomal protein bL12 family. In terms of assembly, homodimer. Part of the ribosomal stalk of the 50S ribosomal subunit. Forms a multimeric L10(L12)X complex, where L10 forms an elongated spine to which 2 to 4 L12 dimers bind in a sequential fashion. Binds GTP-bound translation factors.

Functionally, forms part of the ribosomal stalk which helps the ribosome interact with GTP-bound translation factors. Is thus essential for accurate translation. This Clostridium kluyveri (strain NBRC 12016) protein is Large ribosomal subunit protein bL12.